Consider the following 639-residue polypeptide: Chaperone protein DnaK (639 aa).

Thr197 bears the Phosphothreonine; by autocatalysis mark. The segment at 600-639 is disordered; it reads SGAQGGAQAGPDMNAGQSNAGQNNGKQDDNVQDADFEEVK. Positions 613–624 are enriched in low complexity; that stretch reads NAGQSNAGQNNG. The segment covering 629-639 has biased composition (acidic residues); sequence NVQDADFEEVK.

Belongs to the heat shock protein 70 family.

Functionally, acts as a chaperone. The sequence is that of Chaperone protein DnaK from Bacteroides fragilis (strain ATCC 25285 / DSM 2151 / CCUG 4856 / JCM 11019 / LMG 10263 / NCTC 9343 / Onslow / VPI 2553 / EN-2).